Here is a 516-residue protein sequence, read N- to C-terminus: Alstonine synthase (516 aa).

The helical transmembrane segment at N6 to L26 threads the bilayer. C453 lines the heme pocket.

This sequence belongs to the cytochrome P450 family. Heme is required as a cofactor. Highly expressed in stems. Expressed at low levels in roots.

It localises to the endoplasmic reticulum membrane. It catalyses the reaction tetrahydroalstonine + A + reduced [NADPH--hemoprotein reductase] + O2 = alstonine + AH2 + oxidized [NADPH--hemoprotein reductase] + 2 H2O + H(+). The catalysed reaction is ajmalicine + A + reduced [NADPH--hemoprotein reductase] + O2 = serpentine + AH2 + oxidized [NADPH--hemoprotein reductase] + 2 H2O + H(+). It participates in alkaloid biosynthesis. Its function is as follows. Involved in monoterpene indole alkaloids (MIAs) biosynthesis. Converts by aromatization the tetrahydro-beta-carboline alkaloids tetrahydroalstonine and ajmalicine to the corresponding beta-carboline alkaloids alstonine and serpentine, respectively. The protein is Alstonine synthase of Catharanthus roseus (Madagascar periwinkle).